The sequence spans 340 residues: S-adenosylmethionine:tRNA ribosyltransferase-isomerase (340 aa).

The protein belongs to the QueA family. In terms of assembly, monomer.

The protein localises to the cytoplasm. It carries out the reaction 7-aminomethyl-7-carbaguanosine(34) in tRNA + S-adenosyl-L-methionine = epoxyqueuosine(34) in tRNA + adenine + L-methionine + 2 H(+). Its pathway is tRNA modification; tRNA-queuosine biosynthesis. In terms of biological role, transfers and isomerizes the ribose moiety from AdoMet to the 7-aminomethyl group of 7-deazaguanine (preQ1-tRNA) to give epoxyqueuosine (oQ-tRNA). The chain is S-adenosylmethionine:tRNA ribosyltransferase-isomerase from Vesicomyosocius okutanii subsp. Calyptogena okutanii (strain HA).